The primary structure comprises 313 residues: Coproporphyrin III ferrochelatase (313 aa).

2 residues coordinate Fe(2+): H191 and E270.

The protein belongs to the ferrochelatase family.

It localises to the cytoplasm. The enzyme catalyses Fe-coproporphyrin III + 2 H(+) = coproporphyrin III + Fe(2+). It functions in the pathway porphyrin-containing compound metabolism; protoheme biosynthesis. Functionally, involved in coproporphyrin-dependent heme b biosynthesis. Catalyzes the insertion of ferrous iron into coproporphyrin III to form Fe-coproporphyrin III. This Enterococcus faecalis (strain ATCC 700802 / V583) protein is Coproporphyrin III ferrochelatase.